A 132-amino-acid chain; its full sequence is Auxin-responsive protein SAUR72 (132 aa).

A disordered region spans residues 22–54 (SDSQRPSRRSESFLRSSVTRRSKKQTSSVPEGH). Over residues 23 to 33 (DSQRPSRRSES) the composition is skewed to basic and acidic residues.

It belongs to the ARG7 family. As to quaternary structure, interacts with and inhibits PP2C-D subfamily of type 2C phosphatases such as PP2C67/PP2C-D1. Highly expressed in the steles of roots and hypocotyls.

It is found in the cytoplasm. Provide a mechanistic link between auxin and plasma membrane H(+)-ATPases (PM H(+)-ATPases, e.g. AHA1 and AHA2), and triggers PM H(+)-ATPases activity by promoting phosphorylation of their C-terminal autoinhibitory domain as a result of PP2C-D subfamily of type 2C phosphatases inhibition, thus leading to the acidification of the apoplast and the facilitation of solutes and water uptake to drive cell expansion. Plays a role in the regulation of cell expansion, root meristem patterning and auxin transport. The chain is Auxin-responsive protein SAUR72 from Arabidopsis thaliana (Mouse-ear cress).